A 445-amino-acid polypeptide reads, in one-letter code: Homogentisate 1,2-dioxygenase (445 aa).

Lysine 98 is modified (N6-acetyllysine). Residues histidine 335, glutamate 341, and histidine 371 each contribute to the Fe cation site. Lysine 414 bears the N6-succinyllysine mark.

It belongs to the homogentisate dioxygenase family. As to quaternary structure, homohexamer arranged as a dimer of trimers. Requires Fe cation as cofactor. As to expression, highest expression in the prostate, small intestine, colon, kidney and liver.

The catalysed reaction is homogentisate + O2 = 4-maleylacetoacetate + H(+). Its pathway is amino-acid degradation; L-phenylalanine degradation; acetoacetate and fumarate from L-phenylalanine: step 4/6. Its function is as follows. Catalyzes the conversion of homogentisate to maleylacetoacetate. This Homo sapiens (Human) protein is Homogentisate 1,2-dioxygenase (HGD).